The following is a 129-amino-acid chain: 3-aminoacrylate deaminase RutC (129 aa).

It belongs to the RutC family.

It catalyses the reaction (Z)-3-aminoacrylate + H2O + H(+) = 3-oxopropanoate + NH4(+). In terms of biological role, involved in pyrimidine catabolism. Catalyzes the deamination of 3-aminoacrylate to malonic semialdehyde, a reaction that can also occur spontaneously. RutC may facilitate the reaction and modulate the metabolic fitness, rather than catalyzing essential functions. The sequence is that of 3-aminoacrylate deaminase RutC from Caulobacter vibrioides (strain ATCC 19089 / CIP 103742 / CB 15) (Caulobacter crescentus).